Reading from the N-terminus, the 346-residue chain is fMet-Leu-Phe receptor (346 aa).

Asn1 and Asn7 each carry an N-linked (GlcNAc...) asparagine glycan. The Extracellular portion of the chain corresponds to 1–24 (NSSLPTNISGGTPAVSAGYLFLDI). The helical transmembrane segment at 25–47 (ITYLVYAVTFVLGVLGNGLVIWV) threads the bilayer. Over 48 to 58 (AGFRMTHTVTT) the chain is Cytoplasmic. Residues 59 to 80 (ISYLNLAVADFCFTSTLPFFMV) form a helical membrane-spanning segment. The Extracellular portion of the chain corresponds to 81-97 (RKAMGGHWPFGWFLCKF). A disulfide bridge links Cys95 with Cys173. Residues 98-118 (IFTIVDINLFGSVFLIALIAL) traverse the membrane as a helical segment. At 119–137 (DRCVCVLHPVWTQNHRTVS) the chain is on the cytoplasmic side. The helical transmembrane segment at 138–159 (LAKKVIIGPWVMALLLTLPVII) threads the bilayer. At 160 to 202 (RVTTVPGKMGTVSCTFNFSPWTNDPKERIKVAIAMLTVRGIIR) the chain is on the extracellular side. The helical transmembrane segment at 203–223 (FIIGFSAPMSIVAVSYGLIAT) threads the bilayer. Topologically, residues 224-239 (KIHKQGLIKSSRPLRV) are cytoplasmic. Residues 240 to 263 (LSFVAAAFFLCWSPYQVVAFIATV) form a helical membrane-spanning segment. The Extracellular portion of the chain corresponds to 264–282 (RIRELLQGMYKEISIAVDV). The helical transmembrane segment at 283-302 (TSALAFFNSCLNPMLYVFMG) threads the bilayer. The Cytoplasmic segment spans residues 303–346 (QDFRERLIHSLPASLERALTEASTQTSDTATNSTLPSAEVALQA). Residues 324-338 (ASTQTSDTATNSTLP) show a composition bias toward polar residues. The disordered stretch occupies residues 324–346 (ASTQTSDTATNSTLPSAEVALQA).

The protein belongs to the G-protein coupled receptor 1 family. Post-translationally, phosphorylated; which is necessary for desensitization.

Its subcellular location is the cell membrane. Its function is as follows. High affinity receptor for N-formyl-methionyl peptides (fMLP), which are powerful neutrophil chemotactic factors. Binding of fMLP to the receptor stimulates intracellular calcium mobilization and superoxide anion release. This response is mediated via a G-protein that activates a phosphatidylinositol-calcium second messenger system. Receptor for TAFA4, mediates its effects on chemoattracting macrophages, promoting phagocytosis and increasing ROS release. Receptor for cathepsin CTSG, leading to increased phagocyte chemotaxis. The chain is fMet-Leu-Phe receptor (FPR1) from Pongo pygmaeus (Bornean orangutan).